A 301-amino-acid chain; its full sequence is NDP-polyphosphate phosphotransferase 3 (301 aa).

Positions 1-12 are enriched in basic and acidic residues; sequence MNRNGSTKDPRR. The interval 1-21 is disordered; sequence MNRNGSTKDPRRMTGAATGEI.

This sequence belongs to the polyphosphate kinase 2 (PPK2) family. Class I subfamily. It depends on Mg(2+) as a cofactor.

The catalysed reaction is [phosphate](n) + ATP = [phosphate](n+1) + ADP. It carries out the reaction [phosphate](n) + CTP = [phosphate](n+1) + CDP. It catalyses the reaction [phosphate](n) + GTP = [phosphate](n+1) + GDP. The enzyme catalyses [phosphate](n) + UTP = [phosphate](n+1) + UDP. Its function is as follows. Uses inorganic polyphosphate (polyP) as a donor to convert NDP to NTP. PolyP hydrolysis is slightly faster with UDP, but it can also use ADP, GDP and CDP. This chain is NDP-polyphosphate phosphotransferase 3, found in Ruegeria pomeroyi (strain ATCC 700808 / DSM 15171 / DSS-3) (Silicibacter pomeroyi).